We begin with the raw amino-acid sequence, 498 residues long: Protein flp (498 aa).

A run of 4 helical transmembrane segments spans residues 6 to 26 (LYFLSISIIIIVAISIAIYIT), 389 to 409 (FNIVTVLMTTLILLAFIFSAY), 433 to 453 (LSLCICIALALILYALPYLIL), and 471 to 491 (LALITTLIALFSTLIVILLFL).

Its subcellular location is the cell membrane. In terms of biological role, its precise function is unknown. Has no penicillin-binding activity and is not involved in methicillin resistance. The polypeptide is Protein flp (flp) (Staphylococcus aureus (strain COL)).